Consider the following 30-residue polypeptide: Cycloviolacin-H1 (30 aa).

The segment at residues 1 to 30 (GIPCGESCVYIPCLTSAIGCSCKSKVCYRN) is a cross-link (cyclopeptide (Gly-Asn)). Disulfide bonds link Cys-4–Cys-20, Cys-8–Cys-22, and Cys-13–Cys-27.

Belongs to the cyclotide family. Bracelet subfamily. This is a cyclic peptide.

Its function is as follows. Probably participates in a plant defense mechanism. The polypeptide is Cycloviolacin-H1 (Viola hederacea (Australian violet)).